The chain runs to 493 residues: Glutamyl-tRNA(Gln) amidotransferase subunit A (493 aa).

Active-site charge relay system residues include Lys-78 and Ser-158. The active-site Acyl-ester intermediate is the Ser-182.

This sequence belongs to the amidase family. GatA subfamily. As to quaternary structure, heterotrimer of A, B and C subunits.

The catalysed reaction is L-glutamyl-tRNA(Gln) + L-glutamine + ATP + H2O = L-glutaminyl-tRNA(Gln) + L-glutamate + ADP + phosphate + H(+). Allows the formation of correctly charged Gln-tRNA(Gln) through the transamidation of misacylated Glu-tRNA(Gln) in organisms which lack glutaminyl-tRNA synthetase. The reaction takes place in the presence of glutamine and ATP through an activated gamma-phospho-Glu-tRNA(Gln). This is Glutamyl-tRNA(Gln) amidotransferase subunit A from Rickettsia rickettsii (strain Iowa).